The chain runs to 358 residues: Probable anti-sigma-M factor YhdL (358 aa).

The helical transmembrane segment at 74–96 threads the bilayer; the sequence is ISVLAVISTLMILPLCTLGSYLY.

In terms of assembly, the N-terminus of YhdL interacts with sigma-M. YhdL interacts specifically with YhdK.

The protein localises to the membrane. This chain is Probable anti-sigma-M factor YhdL (yhdL), found in Bacillus subtilis (strain 168).